The primary structure comprises 311 residues: Mitoferrin (311 aa).

Solcar repeat units follow at residues 15–102 (HSIP…MKSF), 111–195 (EHTL…WQQV), and 202–302 (YDPK…FKFM). 6 helical membrane-spanning segments follow: residues 17-36 (IPVH…CVMF), 77-96 (GVNA…FTVY), 112-132 (HTLA…AVMN), 170-189 (SYTT…FMGY), 204-223 (PKSH…AVTT), and 277-296 (GLQA…WSVY).

This sequence belongs to the mitochondrial carrier (TC 2.A.29) family.

It localises to the mitochondrion inner membrane. Mitochondrial iron transporter that mediates iron uptake. Probably required for heme synthesis of hemoproteins and Fe-S cluster assembly. The polypeptide is Mitoferrin (Caenorhabditis briggsae).